The chain runs to 406 residues: MAIEQTAITRATFDEVILPIYAPAEFIPVKGQGSRIWDQQGKEYVDFAGGIAVTALGHCHPALVNALKTQGETLWHISNVFTNEPALRLGRKLIEATFAERVVFMNSGTEANETAFKLARHYACVRHSPFKTKIIAFHNAFHGRSLFTVSVGGQPKYSDGFGPKPADIIHVPFNDLHAVKAVMDDHTCAVVVEPIQGEGGVTAATPEFLQGLRELCDQHQALLVFDEVQCGMGRTGDLFAYMHYGVTPDILTSAKALGGGFPISAMLTTAEIASAFHPGSHGSTYGGNPLACAVAGAAFDIINTPEVLEGIQAKRQRFVDHLQKIDQQYDVFSDIRGMGLLIGAELKPQYKGRARDFLYAGAEAGVMVLNAGPDVMRFAPSLVVEDADIDEGMQRFAHAVAKVVGA.

Residues 108 to 109 (GT) and Phe141 each bind pyridoxal 5'-phosphate. Arg144 serves as a coordination point for N(2)-acetyl-L-ornithine. Residue 226-229 (DEVQ) coordinates pyridoxal 5'-phosphate. The residue at position 255 (Lys255) is an N6-(pyridoxal phosphate)lysine. Position 283 (Ser283) interacts with N(2)-acetyl-L-ornithine. Thr284 contributes to the pyridoxal 5'-phosphate binding site.

This sequence belongs to the class-III pyridoxal-phosphate-dependent aminotransferase family. ArgD subfamily. Homodimer. Pyridoxal 5'-phosphate is required as a cofactor.

It is found in the cytoplasm. The enzyme catalyses N(2)-acetyl-L-ornithine + 2-oxoglutarate = N-acetyl-L-glutamate 5-semialdehyde + L-glutamate. It carries out the reaction N-succinyl-(2S,6S)-2,6-diaminopimelate + 2-oxoglutarate = (S)-2-succinylamino-6-oxoheptanedioate + L-glutamate. The protein operates within amino-acid biosynthesis; L-arginine biosynthesis; N(2)-acetyl-L-ornithine from L-glutamate: step 4/4. It functions in the pathway amino-acid biosynthesis; L-lysine biosynthesis via DAP pathway; LL-2,6-diaminopimelate from (S)-tetrahydrodipicolinate (succinylase route): step 2/3. Involved in both the arginine and lysine biosynthetic pathways. The chain is Acetylornithine/succinyldiaminopimelate aminotransferase from Escherichia coli (strain K12).